An 847-amino-acid polypeptide reads, in one-letter code: B-cell receptor CD22 (847 aa).

Residues 1 to 19 (MHLLGPWLLLLVLEYLAFS) form the signal peptide. The Ig-like V-type domain maps to 20–138 (DSSKWVFEHP…MERIHLNVSE (119 aa)). Topologically, residues 20–687 (DSSKWVFEHP…YYSPETIGRR (668 aa)) are extracellular. 3 disulfides stabilise this stretch: Cys39-Cys167, Cys44-Cys102, and Cys161-Cys219. 3 N-linked (GlcNAc...) asparagine glycosylation sites follow: Asn67, Asn101, and Asn112. Position 120 (Arg120) interacts with N-acetylneuraminate. Residues Asn135, Asn164, and Asn231 are each glycosylated (N-linked (GlcNAc...) asparagine). 6 consecutive Ig-like C2-type domains span residues 143–235 (PHIQ…DTVQ), 242–326 (PKLE…VFLQ), 331–416 (PEPS…LDVQ), 419–500 (PKKV…VALN), 505–582 (PRDV…QTAS), and 593–676 (PRRL…STLT). Intrachain disulfides connect Cys265-Cys309, Cys353-Cys396, Cys442-Cys484, and Cys529-Cys571. N-linked (GlcNAc...) asparagine glycosylation is found at Asn363, Asn445, and Asn479. N-linked (GlcNAc...) asparagine glycans are attached at residues Asn574 and Asn634. Cys616 and Cys659 are oxidised to a cystine. Residues 688 to 706 (VAVGLGSCLAILILAICGL) form a helical membrane-spanning segment. Topologically, residues 707–847 (KLQRRWKRTQ…ENVDYVILKH (141 aa)) are cytoplasmic. Ser725, Ser726, and Ser729 each carry phosphoserine. 2 consecutive short sequence motifs (ITIM motif) follow at residues 760 to 765 (ISYTTL) and 794 to 799 (VTYSAL). Tyr762 is modified (phosphotyrosine). Tyr807, Tyr822, and Tyr842 each carry phosphotyrosine. 2 short sequence motifs (ITIM motif) span residues 820–825 (IHYSEL) and 840–845 (VDYVIL).

The protein belongs to the immunoglobulin superfamily. SIGLEC (sialic acid binding Ig-like lectin) family. Predominantly monomer of isoform CD22-beta. Also found as heterodimer of isoform CD22-beta and a shorter isoform. Interacts with PTPN6/SHP-1, LYN, SYK, PIK3R1/PIK3R2 and PLCG1 upon phosphorylation. Interacts with GRB2, INPP5D and SHC1 upon phosphorylation. May form a complex with INPP5D/SHIP, GRB2 and SHC1. Post-translationally, phosphorylation of Tyr-762, Tyr-807 and Tyr-822 are involved in binding to SYK, GRB2 and SYK, respectively. Phosphorylation of Tyr-842 is involved in binding to SYK, PLCG2 and PIK3R1/PIK3R2. Phosphorylated on tyrosine residues by LYN. In terms of tissue distribution, B-lymphocytes.

Its subcellular location is the cell membrane. Most highly expressed siglec (sialic acid-binding immunoglobulin-like lectin) on B-cells that plays a role in various aspects of B-cell biology including differentiation, antigen presentation, and trafficking to bone marrow. Binds to alpha 2,6-linked sialic acid residues of surface molecules such as CD22 itself, CD45 and IgM in a cis configuration. Can also bind to ligands on other cells as an adhesion molecule in a trans configuration. Acts as an inhibitory coreceptor on the surface of B-cells and inhibits B-cell receptor induced signaling, characterized by inhibition of the calcium mobilization and cellular activation. Mechanistically, the immunoreceptor tyrosine-based inhibitory motif domain is phosphorylated by the Src kinase LYN, which in turn leads to the recruitment of the protein tyrosine phosphatase 1/PTPN6, leading to the negative regulation of BCR signaling. If this negative signaling from is of sufficient strength, apoptosis of the B-cell can be induced. This Homo sapiens (Human) protein is B-cell receptor CD22.